Here is a 498-residue protein sequence, read N- to C-terminus: Histidine--tRNA ligase (498 aa).

Belongs to the class-II aminoacyl-tRNA synthetase family. Homodimer.

Its subcellular location is the cytoplasm. It carries out the reaction tRNA(His) + L-histidine + ATP = L-histidyl-tRNA(His) + AMP + diphosphate + H(+). This Bartonella quintana (strain Toulouse) (Rochalimaea quintana) protein is Histidine--tRNA ligase.